The chain runs to 114 residues: RNA polymerase-binding protein RbpA (114 aa).

The protein belongs to the RNA polymerase-binding protein RbpA family. In terms of assembly, monomer. Forms a complex with the RNAP catalytic core, specifically with the beta subunit (RpoB); its binding site may overlap with that of Rif. May bind free principal sigma factors.

In terms of biological role, binds to RNA polymerase (RNAP), probably stimulating transcriptions from principal, but not alternative sigma factor promoters. Partially restores transcription in the presence of rifampicin (Rif) in vitro; overexpression leads to an increase in the Rif tolerance in vivo, with smaller colonies. Seems to act by removing Rif from its binding site and preventing its further binding. No longer stimulates transcription in Rif-resistant RNA polymerase (with mutations in rpoB). The chain is RNA polymerase-binding protein RbpA from Mycolicibacterium smegmatis (strain ATCC 700084 / mc(2)155) (Mycobacterium smegmatis).